A 237-amino-acid polypeptide reads, in one-letter code: Class B acid phosphatase (237 aa).

An N-terminal signal peptide occupies residues 1–25 (MRKVSLALSAACLLFTLNYTASALA). Catalysis depends on aspartate 69, which acts as the Nucleophile. Residues aspartate 69 and aspartate 71 each coordinate Mg(2+). Aspartate 71 serves as the catalytic Proton donor. Substrate is bound by residues 137 to 138 (TG) and lysine 177. Aspartate 192 is a binding site for Mg(2+).

Belongs to the class B bacterial acid phosphatase family. As to quaternary structure, homotetramer. Requires Mg(2+) as cofactor.

It localises to the periplasm. It catalyses the reaction a phosphate monoester + H2O = an alcohol + phosphate. Dephosphorylates several organic phosphate monoesters. Also has a phosphotransferase activity catalyzing the transfer of low-energy phosphate groups from organic phosphate monoesters to free hydroxyl groups of various organic compounds. The polypeptide is Class B acid phosphatase (Citrobacter rodentium (strain ICC168) (Citrobacter freundii biotype 4280)).